The chain runs to 1369 residues: Phospholipase D1 (1369 aa).

Disordered regions lie at residues 27–90 (YSEK…SSWH) and 318–340 (ESHSQDGDRTTGQPRHANNGRKK). A compositionally biased stretch (basic and acidic residues) spans 31–53 (GTGRKDAEDHTPSKITDLEKNVD). One can recognise a PX domain in the interval 208 to 379 (TDLIKVSVLD…NVLYSFLEFS (172 aa)). PLD phosphodiesterase domains lie at 641-668 (LFWAHHEKLVVVDDAITFIGGIDLCFGR) and 941-968 (EMIYVHAKILIADDRVAVIGSANINERS). Residues 1277 to 1289 (HETHEKSENDPKN) show a composition bias toward basic and acidic residues. The tract at residues 1277 to 1320 (HETHEKSENDPKNPKAGSQGSGNTSASEDSKTEKPKTRTNNGLQ) is disordered. Over residues 1292–1303 (AGSQGSGNTSAS) the composition is skewed to polar residues.

The protein belongs to the phospholipase D family.

The protein localises to the cytoplasm. It catalyses the reaction a 1,2-diacyl-sn-glycero-3-phosphocholine + H2O = a 1,2-diacyl-sn-glycero-3-phosphate + choline + H(+). With respect to regulation, activity is slightly stimulated by oleate. Required for meiosis and spore formation. Seems to be involved in the coordinate induction of late meiotic events. The chain is Phospholipase D1 (pld1) from Schizosaccharomyces pombe (strain 972 / ATCC 24843) (Fission yeast).